The sequence spans 446 residues: MISGLFIFNLKGDTLICKTFRHDLKKSVTEIFRVAILTNTDYRHPIVSIGSSTYIYTKHEDLYVVAITKGNPNVMIVLEFLESLIQDLTHYFGKLNENTVKDNVSFIFELLDEMIDYGIIQTTEPDALARSVSITAVKKKGNALSLKRSHSSQLAHTTSSEIPGSVPWRRAGIKYRKNSIYIDIVERMNLLISSTGNVLRSDVSGVVKMRAMLSGMPECQFGLNDKLDFKLKQSESKSKSNNSRNPSSVNGGFVILEDCQFHQCVRLPEFENEHRITFIPPDGEVELMSYRSHENINIPFRIVPIVEQLSKQKIIYRISIRADYPHKLSSSLNFRIPVPTNVVKANPRVNRGKAGYEPSENIINWKIPRFLGETELIFYAEVELSNTTNQQIWAKPPISLDFNILMFTSSGLHVQYLRVSEPSNSKYKSIKWVRYSTRAGTCEIRI.

Residues serine 145, serine 151, and serine 152 each carry the phosphoserine modification. The residue at position 157 (threonine 157) is a Phosphothreonine. Residues 177 to 445 (KNSIYIDIVE…STRAGTCEIR (269 aa)) form the MHD domain.

Belongs to the adaptor complexes medium subunit family. Adaptor protein complex 2 (AP-2) is a heterotetramer composed of two large adaptins (alpha-type subunit apl3 and beta-type subunit apl1), a medium chain (mu-type subunit apm4) and a small adaptin (sigma-type subunit aps2).

The protein resides in the cell membrane. It is found in the membrane. It localises to the coated pit. Component of the adaptor complexes which link clathrin to receptors in coated vesicles. Clathrin-associated protein complexes are believed to interact with the cytoplasmic tails of membrane proteins, leading to their selection and concentration. AP50 is a subunit of the plasma membrane adaptor (Potential). This chain is AP-2 complex subunit mu (apm4), found in Schizosaccharomyces pombe (strain 972 / ATCC 24843) (Fission yeast).